We begin with the raw amino-acid sequence, 458 residues long: UDP-N-acetylmuramoylalanine--D-glutamate ligase (458 aa).

Residue 124 to 130 participates in ATP binding; that stretch reads GSDGKTT.

Belongs to the MurCDEF family.

The protein resides in the cytoplasm. It carries out the reaction UDP-N-acetyl-alpha-D-muramoyl-L-alanine + D-glutamate + ATP = UDP-N-acetyl-alpha-D-muramoyl-L-alanyl-D-glutamate + ADP + phosphate + H(+). The protein operates within cell wall biogenesis; peptidoglycan biosynthesis. In terms of biological role, cell wall formation. Catalyzes the addition of glutamate to the nucleotide precursor UDP-N-acetylmuramoyl-L-alanine (UMA). The protein is UDP-N-acetylmuramoylalanine--D-glutamate ligase of Clostridium novyi (strain NT).